The sequence spans 678 residues: THO complex subunit 5 homolog B (678 aa).

2 disordered regions span residues 1 to 37 (MSSDSLKKRKPKVNRSEDGKRGRHDEQEGRYYSEEAE) and 294 to 329 (ALFKPPEDSQDDESDSDAEEEQTTKRRRPTLGVQLD). The Nuclear localization signal signature appears at 7-10 (KKRK). Basic and acidic residues predominate over residues 14-37 (NRSEDGKRGRHDEQEGRYYSEEAE). Positions 301–314 (DSQDDESDSDAEEE) are enriched in acidic residues.

The protein belongs to the THOC5 family. As to quaternary structure, component of the THO subcomplex, which is composed of thoc1, thoc2, thoc3, thoc5, thoc6 and thoc7. Component of the transcription/export (TREX) complex at least composed of alyref/thoc4, ddx39b, sarnp/cip29, chtop and the THO subcomplex. Interacts with thoc7.

It is found in the nucleus. The protein resides in the nucleus speckle. It localises to the cytoplasm. Its function is as follows. Component of the THO subcomplex of the TREX complex which is thought to couple mRNA transcription, processing and nuclear export, and which specifically associates with spliced mRNA and not with unspliced pre-mRNA. Plays a key structural role in the oligomerization of the THO-ddx39b complex. TREX is recruited to spliced mRNAs by a transcription-independent mechanism, binds to mRNA upstream of the exon-junction complex (EJC) and is recruited in a splicing- and cap-dependent manner to a region near the 5' end of the mRNA where it functions in mRNA export to the cytoplasm via the TAP/NXF1 pathway. May be involved in cell differentiation. In Xenopus laevis (African clawed frog), this protein is THO complex subunit 5 homolog B (thoc5-b).